The primary structure comprises 132 residues: D-ribose pyranase (132 aa).

H20 functions as the Proton donor in the catalytic mechanism. Residues D28, H99, and 121 to 123 (YSN) each bind substrate.

The protein belongs to the RbsD / FucU family. RbsD subfamily. As to quaternary structure, homodecamer.

The protein resides in the cytoplasm. The enzyme catalyses beta-D-ribopyranose = beta-D-ribofuranose. It participates in carbohydrate metabolism; D-ribose degradation; D-ribose 5-phosphate from beta-D-ribopyranose: step 1/2. Catalyzes the interconversion of beta-pyran and beta-furan forms of D-ribose. The protein is D-ribose pyranase of Pseudomonas putida (strain GB-1).